A 221-amino-acid polypeptide reads, in one-letter code: Pyridoxine/pyridoxamine 5'-phosphate oxidase (221 aa).

Substrate is bound by residues 14–17 and Lys73; that span reads RNEY. FMN-binding positions include 68-73, 83-84, Lys90, and Gln112; these read RTVLLK and FT. Residues Tyr130, Arg134, and Ser138 each coordinate substrate. Residues 147–148 and Trp193 contribute to the FMN site; that span reads QS. A substrate-binding site is contributed by 199 to 201; the sequence is RLH. Arg203 is a binding site for FMN.

The protein belongs to the pyridoxamine 5'-phosphate oxidase family. Homodimer. Requires FMN as cofactor.

It carries out the reaction pyridoxamine 5'-phosphate + O2 + H2O = pyridoxal 5'-phosphate + H2O2 + NH4(+). The catalysed reaction is pyridoxine 5'-phosphate + O2 = pyridoxal 5'-phosphate + H2O2. Its pathway is cofactor metabolism; pyridoxal 5'-phosphate salvage; pyridoxal 5'-phosphate from pyridoxamine 5'-phosphate: step 1/1. It functions in the pathway cofactor metabolism; pyridoxal 5'-phosphate salvage; pyridoxal 5'-phosphate from pyridoxine 5'-phosphate: step 1/1. In terms of biological role, catalyzes the oxidation of either pyridoxine 5'-phosphate (PNP) or pyridoxamine 5'-phosphate (PMP) into pyridoxal 5'-phosphate (PLP). This Salinispora arenicola (strain CNS-205) protein is Pyridoxine/pyridoxamine 5'-phosphate oxidase.